Here is a 348-residue protein sequence, read N- to C-terminus: Short-wave-sensitive opsin 1 (348 aa).

Topologically, residues 1 to 33 (MRKMSEEEFYLFKNISSVGPWDGPQYHIAPVWA) are extracellular. N-linked (GlcNAc...) asparagine glycosylation is present at Asn14. Residues 34-58 (FYLQAAFMGTVFLIGFPLNAMVLVA) traverse the membrane as a helical segment. The Cytoplasmic segment spans residues 59-70 (TLRYKKLRQPLN). The chain crosses the membrane as a helical span at residues 71–96 (YILVNVSFGGFLLCIFSVFPVFVASC). The Extracellular segment spans residues 97-110 (NGYFVFGRHVCALE). Cys107 and Cys184 are disulfide-bonded. A helical transmembrane segment spans residues 111–130 (GFLGTVAGLVTGWSLAFLAF). Topologically, residues 131–149 (ERYIVICKPFGNFRFSSKH) are cytoplasmic. Residues 150–173 (ALTVVLATWTIGIGVSIPPFFGWS) form a helical membrane-spanning segment. At 174–199 (RFIPEGLQCSCGPDWYTVGTKYRSES) the chain is on the extracellular side. Residues 200 to 227 (YTWFLFIFCFIVPLSLICFSYTQLLRAL) form a helical membrane-spanning segment. The Cytoplasmic portion of the chain corresponds to 228–249 (KAVAAQQQESATTQKAEREVSR). Residues 250-273 (MVVVMVGSFCVCYVPYAAFAMYMV) form a helical membrane-spanning segment. Topologically, residues 274–281 (NNRNHGLD) are extracellular. The chain crosses the membrane as a helical span at residues 282–306 (LRLVTIPSFFSKSACIYNPIIYCFM). At Lys293 the chain carries N6-(retinylidene)lysine. At 307-348 (NKQFQACIMKMVCGKAMTDESDTCSSQKTEVSTVSSTQVGPN) the chain is on the cytoplasmic side.

The protein belongs to the G-protein coupled receptor 1 family. Opsin subfamily. Post-translationally, phosphorylated on some or all of the serine and threonine residues present in the C-terminal region.

Its subcellular location is the cell membrane. It is found in the photoreceptor inner segment. The protein localises to the cell projection. The protein resides in the cilium. It localises to the photoreceptor outer segment. Its subcellular location is the cytoplasm. It is found in the perinuclear region. Visual pigments are the light-absorbing molecules that mediate vision. They consist of an apoprotein, opsin, covalently linked to cis-retinal. Required for the maintenance of cone outer segment organization in the ventral retina, but not essential for the maintenance of functioning cone photoreceptors. Involved in ensuring correct abundance and localization of retinal membrane proteins. May increase spectral sensitivity in dim light. This chain is Short-wave-sensitive opsin 1 (OPN1SW), found in Pan paniscus (Pygmy chimpanzee).